The sequence spans 225 residues: UPF0758 protein Spea_3837 (225 aa).

One can recognise an MPN domain in the interval 102-224 (ILSDPDLTRD…IVSFAERGWI (123 aa)). His173, His175, and Asp186 together coordinate Zn(2+). The short motif at 173–186 (HNHPSGIAEPSTAD) is the JAMM motif element.

This sequence belongs to the UPF0758 family.

This chain is UPF0758 protein Spea_3837, found in Shewanella pealeana (strain ATCC 700345 / ANG-SQ1).